Reading from the N-terminus, the 312-residue chain is Malate dehydrogenase (312 aa).

NAD(+) contacts are provided by residues 7–13 and Asp-34; that span reads GAAGGIG. Positions 81 and 87 each coordinate substrate. NAD(+) is bound by residues Asn-94 and 117-119; that span reads ITN. The substrate site is built by Asn-119 and Arg-153. His-177 serves as the catalytic Proton acceptor. Met-227 contacts NAD(+).

Belongs to the LDH/MDH superfamily. MDH type 1 family. As to quaternary structure, homodimer.

It catalyses the reaction (S)-malate + NAD(+) = oxaloacetate + NADH + H(+). Its function is as follows. Catalyzes the reversible oxidation of malate to oxaloacetate. The chain is Malate dehydrogenase from Citrobacter koseri (strain ATCC BAA-895 / CDC 4225-83 / SGSC4696).